Reading from the N-terminus, the 699-residue chain is tRNA(Met) cytidine acetyltransferase TmcA (699 aa).

Residues Gln-178, 200-209 (GRGKSTLAGM), and Arg-322 each bind ATP. Residues 408 to 547 (MHIASAQVAG…SGCYSAMAIL (140 aa)) enclose the N-acetyltransferase domain. Residues 475 to 477 (IAV) and 482 to 488 (RRQGIGR) contribute to the acetyl-CoA site.

The protein belongs to the RNA cytidine acetyltransferase family. TmcA subfamily.

It is found in the cytoplasm. The enzyme catalyses cytidine(34) in elongator tRNA(Met) + acetyl-CoA + ATP + H2O = N(4)-acetylcytidine(34) in elongator tRNA(Met) + ADP + phosphate + CoA + H(+). In terms of biological role, catalyzes the formation of N(4)-acetylcytidine (ac(4)C) at the wobble position of tRNA(Met), by using acetyl-CoA as an acetyl donor and ATP (or GTP). The protein is tRNA(Met) cytidine acetyltransferase TmcA of Pectobacterium atrosepticum (strain SCRI 1043 / ATCC BAA-672) (Erwinia carotovora subsp. atroseptica).